Consider the following 303-residue polypeptide: Probable cell division protein WhiA (303 aa).

The segment at residues 272 to 303 (SIQQLADSLSTPLTKSGVNHRLRKINKIADEL) is a DNA-binding region (H-T-H motif).

The protein belongs to the WhiA family.

Functionally, involved in cell division and chromosome segregation. This is Probable cell division protein WhiA from Streptococcus pneumoniae (strain ATCC 700669 / Spain 23F-1).